Reading from the N-terminus, the 346-residue chain is Protein PXR1 (346 aa).

Disordered regions lie at residues 1–27 (MGLA…NTEN) and 146–315 (EDAE…QVSV). The span at 15 to 27 (DPNNTRWSRNTEN) shows a compositional bias: polar residues. The region spanning 25-79 (TENFGHRMLRSQGWEPGQYLGPQDASHAVYHTAASASHIKVALKEDNLGLGAKMN) is the G-patch domain. Over residues 215-230 (SKSKKSHKSKKEKKRR) the composition is skewed to basic residues. Acidic residues predominate over residues 235–245 (ASDEQESEDEE). A compositionally biased stretch (basic residues) spans 249–274 (KRRKKEKKERKERRREKREKKLKKKQ). A compositionally biased stretch (polar residues) spans 293–314 (GVDTGASTPVASGTSTPVSQVS).

The protein belongs to the PINX1 family.

It localises to the nucleus. The protein localises to the nucleolus. Involved in rRNA-processing at A0, A1 and A2 sites and negatively regulates telomerase. This chain is Protein PXR1 (PXR1), found in Pyricularia oryzae (strain 70-15 / ATCC MYA-4617 / FGSC 8958) (Rice blast fungus).